Here is a 106-residue protein sequence, read N- to C-terminus: MMGNKLTLPAELPDEQDLRAVLAYNMRLFRVNKGWSQEELARQCGLDRTYVSAVERKRWNIALSNIEKMAAALGVAAYQLLLPPQERLKLMTNSADTRQMPSESGI.

Residues 26–80 (MRLFRVNKGWSQEELARQCGLDRTYVSAVERKRWNIALSNIEKMAAALGVAAYQL) enclose the HTH cro/C1-type domain. Positions 37–56 (QEELARQCGLDRTYVSAVER) form a DNA-binding region, H-T-H motif.

Homodimer. Can interact with the dimeric form of the DNA mimic protein DMP19 with 1:1 stoichiometry.

It localises to the cytoplasm. With respect to regulation, repressor activity is inhibited in the presence of the DNA mimic protein DMP19, which interacts with NHTF and prevents binding of NHTF to its DNA-binding sites. Its function is as follows. Transcriptional regulator probably involved in the response to nitrogen levels. Down-regulates its own expression as well as the expression of the downstream gene, glnD, which encodes the [Protein-PII] uridylyltransferase, a key enzyme in the nitrogen regulation system. Acts by binding to a specific palindromic DNA sequence (5'-TGTNANTNACA-3') in its 5'-untranslated region. The sequence is that of Neisseria hypothetical transcription factor from Neisseria meningitidis serogroup B (strain ATCC BAA-335 / MC58).